A 185-amino-acid chain; its full sequence is HTH-type transcriptional regulator Hpr (185 aa).

Positions 13–157 (AMIFSQRIAQ…LIAILRNIYG (145 aa)) constitute an HTH marR-type domain. A DNA-binding region (H-T-H motif) is located at residues 63-86 (ISEIAKFGVMHVSTAFNFSKKLEE).

As to quaternary structure, homodimer.

Negative regulator of protease production and sporulation. The protein is HTH-type transcriptional regulator Hpr of Bacillus mycoides (strain KBAB4) (Bacillus weihenstephanensis).